Here is a 300-residue protein sequence, read N- to C-terminus: Porphobilinogen deaminase (300 aa).

Cysteine 243 bears the S-(dipyrrolylmethanemethyl)cysteine mark.

This sequence belongs to the HMBS family. As to quaternary structure, monomer. Dipyrromethane is required as a cofactor.

The catalysed reaction is 4 porphobilinogen + H2O = hydroxymethylbilane + 4 NH4(+). The protein operates within porphyrin-containing compound metabolism; protoporphyrin-IX biosynthesis; coproporphyrinogen-III from 5-aminolevulinate: step 2/4. Functionally, tetrapolymerization of the monopyrrole PBG into the hydroxymethylbilane pre-uroporphyrinogen in several discrete steps. In Clostridium novyi (strain NT), this protein is Porphobilinogen deaminase.